The primary structure comprises 550 residues: Hydroxylamine reductase (550 aa).

Residues cysteine 3, cysteine 6, cysteine 18, and cysteine 25 each contribute to the [2Fe-2S] cluster site. Residues histidine 249, glutamate 273, cysteine 317, cysteine 405, cysteine 433, cysteine 458, glutamate 492, and lysine 494 each contribute to the hybrid [4Fe-2O-2S] cluster site. Cysteine 405 is subject to Cysteine persulfide.

Belongs to the HCP family. Requires [2Fe-2S] cluster as cofactor. The cofactor is hybrid [4Fe-2O-2S] cluster.

It is found in the cytoplasm. The enzyme catalyses A + NH4(+) + H2O = hydroxylamine + AH2 + H(+). Functionally, catalyzes the reduction of hydroxylamine to form NH(3) and H(2)O. The protein is Hydroxylamine reductase of Enterobacter sp. (strain 638).